Reading from the N-terminus, the 544-residue chain is Chaperonin GroEL (544 aa).

Residues Thr-30 to Pro-33, Lys-51, Asp-87 to Thr-91, Gly-415, and Asp-495 contribute to the ATP site.

It belongs to the chaperonin (HSP60) family. Forms a cylinder of 14 subunits composed of two heptameric rings stacked back-to-back. Interacts with the co-chaperonin GroES.

It is found in the cytoplasm. It catalyses the reaction ATP + H2O + a folded polypeptide = ADP + phosphate + an unfolded polypeptide.. Together with its co-chaperonin GroES, plays an essential role in assisting protein folding. The GroEL-GroES system forms a nano-cage that allows encapsulation of the non-native substrate proteins and provides a physical environment optimized to promote and accelerate protein folding. This Neisseria meningitidis serogroup C (strain 053442) protein is Chaperonin GroEL.